The following is a 605-amino-acid chain: MAIKQLSETLINQIAAGEVIERPASAAKELIENALDAGATRIEIATAGGGKTLLRVTDNGLGMSPADLELAIRRHCTSKLDGSLADIRTLGFRGEALPSIGSVARLSITTRTAEAREGATITITGGRSDPVRPSAAVVGTVVEVRELFFATPARLKFMKSERAETAAISEVVRRMAIAFPKVRFVLSGSDRSALEFPATGDDRLARMAQVLGRDFRDNAIEIDAEREGARLTGFAGVPTFNRGNSLQQYAFVNGRPVQDKLIMSAIRAAYAETVPQGRYPVAVLSLTIDPALVDVNVHPAKSDVRFRDPGLIRGLIIGAIREALMREGDRAATTGAQGLMRAFRPEFHRGDQQRPQEPWTAATSPYRPFSPGGAARGFAETPQAAFSDFAQPSARNAAVPVDSIQAADGQAASFPLGAARAQLHENYIVAQTDDGLVIVDQHAAHERLVFETMRTALHARPVPAQALLIPEIVDLPEEDCDRLVAHAGEFTRLGLAIERFGPAAIAVRETPAMLGEMDAAGLVRQLADELAEWDTADGLAGRLEYLAATMACHGSVRSGRRLRTEEMNALLRRMEATPGSGQCNHGRPTYIELKLADIERLFGRS.

It belongs to the DNA mismatch repair MutL/HexB family.

This protein is involved in the repair of mismatches in DNA. It is required for dam-dependent methyl-directed DNA mismatch repair. May act as a 'molecular matchmaker', a protein that promotes the formation of a stable complex between two or more DNA-binding proteins in an ATP-dependent manner without itself being part of a final effector complex. This chain is DNA mismatch repair protein MutL, found in Sinorhizobium medicae (strain WSM419) (Ensifer medicae).